Reading from the N-terminus, the 351-residue chain is D-alanine--D-alanine ligase (351 aa).

The region spanning 141-349 (KAAFSAAGLP…ISQLVARLIE (209 aa)) is the ATP-grasp domain. Residue 176 to 231 (ETQLGYPCFIKPANLGSSVGISKAYDKKELLNGLDLAAQLDSRIVVEKNIKARELE) participates in ATP binding. D302, E316, and N318 together coordinate Mg(2+).

This sequence belongs to the D-alanine--D-alanine ligase family. Requires Mg(2+) as cofactor. It depends on Mn(2+) as a cofactor.

The protein resides in the cytoplasm. The enzyme catalyses 2 D-alanine + ATP = D-alanyl-D-alanine + ADP + phosphate + H(+). The protein operates within cell wall biogenesis; peptidoglycan biosynthesis. Its function is as follows. Cell wall formation. In Prochlorococcus marinus (strain SARG / CCMP1375 / SS120), this protein is D-alanine--D-alanine ligase.